The primary structure comprises 209 residues: Probable transcriptional regulator ycf29 (209 aa).

Residues Asn-4–Ile-120 enclose the Response regulatory domain. 4-aspartylphosphate is present on Asp-53. An HTH luxR-type domain is found at Pro-139–Asn-204.

It localises to the plastid. The protein localises to the chloroplast. In Porphyra purpurea (Red seaweed), this protein is Probable transcriptional regulator ycf29 (ycf29).